Reading from the N-terminus, the 40-residue chain is uncharacterized protein (40 aa).

The helical transmembrane segment at 20–37 (TYLYWTAVTAAYLTYLTI) threads the bilayer.

It localises to the membrane. This is an uncharacterized protein from Archaeoglobus fulgidus (strain ATCC 49558 / DSM 4304 / JCM 9628 / NBRC 100126 / VC-16).